A 70-amino-acid chain; its full sequence is MVKVKSKNSVIKLLSTAASGYSRYISIKKGAPLVTQVRYDPVVKRHVLFKEAKKRKVAERKPLDFLRTAK.

This sequence belongs to the bacterial ribosomal protein bL33 family. In terms of assembly, component of the mitochondrial large ribosomal subunit (mt-LSU). Mature yeast 74S mitochondrial ribosomes consist of a small (37S) and a large (54S) subunit. The 37S small subunit contains a 15S ribosomal RNA (15S mt-rRNA) and 34 different proteins. The 54S large subunit contains a 21S rRNA (21S mt-rRNA) and 46 different proteins. bL33m stabilizes the tRNA acceptor stem in the E-site.

Its subcellular location is the mitochondrion. Component of the mitochondrial ribosome (mitoribosome), a dedicated translation machinery responsible for the synthesis of mitochondrial genome-encoded proteins, including at least some of the essential transmembrane subunits of the mitochondrial respiratory chain. The mitoribosomes are attached to the mitochondrial inner membrane and translation products are cotranslationally integrated into the membrane. The polypeptide is Large ribosomal subunit protein bL33m (MRPL39) (Saccharomyces cerevisiae (strain ATCC 204508 / S288c) (Baker's yeast)).